The chain runs to 382 residues: MSFAGMLNRLHGQPESYDKKSKYKFGRTLGAGTYGVVREADGPSGKVAIKIILKKNVKGNEKMVYAELDMLQRLTHPHIVKFVDWFESRDKFYIVTQLATGGELFDRICDQGKFTEVDASQTIRQIMTAVDYLHDNDVVHRDLKPENLLYVTRDPDSDLVLADFGITKTLDIKEETLTTMAGSFGYAAPEVMEQKGHGKPVDMWSMGVITYTLLCGYSPFRSENLRDLLRECTAAPVPFHERYWKDVSQDAKDFILVLLVPEPEKRWTSKEALGHIWLSGKNATDHNLLPELEAYRRRARLRRVIEIVKLQNRIAKLKEHEEDPSESDMGDAQGASDNHKGDGSRLHALGLFAVREAKQKQESLQVEEELEKESRRRSFSNA.

Residues 23 to 278 (YKFGRTLGAG…SKEALGHIWL (256 aa)) form the Protein kinase domain. ATP-binding positions include 29–37 (LGAGTYGVV) and lysine 50. Aspartate 142 serves as the catalytic Proton acceptor. The calmodulin-binding stretch occupies residues 291-301 (ELEAYRRRARL). Disordered regions lie at residues 318–344 (KEHEEDPSESDMGDAQGASDNHKGDGS) and 359–382 (QKQESLQVEEELEKESRRRSFSNA).

The protein belongs to the protein kinase superfamily. CAMK Ser/Thr protein kinase family. CaMK subfamily.

The enzyme catalyses L-seryl-[protein] + ATP = O-phospho-L-seryl-[protein] + ADP + H(+). The catalysed reaction is L-threonyl-[protein] + ATP = O-phospho-L-threonyl-[protein] + ADP + H(+). In Metarhizium anisopliae (Entomophthora anisopliae), this protein is Calcium/calmodulin-dependent protein kinase.